The following is a 250-amino-acid chain: Ribonuclease HII (250 aa).

An RNase H type-2 domain is found at 66–250; that stretch reads QLVAGVDEVG…SFAPVSEYEK (185 aa). Residues D72, E73, and D164 each coordinate a divalent metal cation.

Belongs to the RNase HII family. The cofactor is Mn(2+). Mg(2+) is required as a cofactor.

Its subcellular location is the cytoplasm. The enzyme catalyses Endonucleolytic cleavage to 5'-phosphomonoester.. Its function is as follows. Endonuclease that specifically degrades the RNA of RNA-DNA hybrids. In Lactobacillus gasseri (strain ATCC 33323 / DSM 20243 / BCRC 14619 / CIP 102991 / JCM 1131 / KCTC 3163 / NCIMB 11718 / NCTC 13722 / AM63), this protein is Ribonuclease HII.